The primary structure comprises 159 residues: S-ribosylhomocysteine lyase (159 aa).

The Fe cation site is built by His53, His57, and Cys124.

It belongs to the LuxS family. Homodimer. Fe cation serves as cofactor.

The enzyme catalyses S-(5-deoxy-D-ribos-5-yl)-L-homocysteine = (S)-4,5-dihydroxypentane-2,3-dione + L-homocysteine. Functionally, involved in the synthesis of autoinducer 2 (AI-2) which is secreted by bacteria and is used to communicate both the cell density and the metabolic potential of the environment. The regulation of gene expression in response to changes in cell density is called quorum sensing. Catalyzes the transformation of S-ribosylhomocysteine (RHC) to homocysteine (HC) and 4,5-dihydroxy-2,3-pentadione (DPD). The protein is S-ribosylhomocysteine lyase of Porphyromonas gingivalis (strain ATCC 33277 / DSM 20709 / CIP 103683 / JCM 12257 / NCTC 11834 / 2561).